A 447-amino-acid polypeptide reads, in one-letter code: Phosphoglucosamine mutase (447 aa).

Ser104 serves as the catalytic Phosphoserine intermediate. Mg(2+) contacts are provided by Ser104, Asp243, Asp245, and Asp247. Ser104 is subject to Phosphoserine.

The protein belongs to the phosphohexose mutase family. Mg(2+) serves as cofactor. Post-translationally, activated by phosphorylation.

The enzyme catalyses alpha-D-glucosamine 1-phosphate = D-glucosamine 6-phosphate. Its function is as follows. Catalyzes the conversion of glucosamine-6-phosphate to glucosamine-1-phosphate. This Corynebacterium diphtheriae (strain ATCC 700971 / NCTC 13129 / Biotype gravis) protein is Phosphoglucosamine mutase.